Here is an 85-residue protein sequence, read N- to C-terminus: UPF0213 protein NP_0776A (85 aa).

The GIY-YIG domain maps to 3-78; the sequence is ADHYVYVLSC…KSLSRAKKER (76 aa). Residues 58-70 show a composition bias toward basic and acidic residues; it reads KSAAMQREHEIKS. The segment at 58-85 is disordered; that stretch reads KSAAMQREHEIKSLSRAKKERLVADETG.

Belongs to the UPF0213 family.

The sequence is that of UPF0213 protein NP_0776A from Natronomonas pharaonis (strain ATCC 35678 / DSM 2160 / CIP 103997 / JCM 8858 / NBRC 14720 / NCIMB 2260 / Gabara) (Halobacterium pharaonis).